The following is a 675-amino-acid chain: Protein distal antenna (675 aa).

The HTH psq-type domain maps to Thr5–Leu56. Residues Lys32–Asn52 constitute a DNA-binding region (H-T-H motif). Disordered stretches follow at residues Gln239–Ser269, Leu337–Thr393, Leu458–Asn534, Phe546–Ser596, and Glu655–Lys675. The span at Ser339–Thr368 shows a compositional bias: low complexity. The span at Pro369–Ser384 shows a compositional bias: pro residues. Residues Val469–Asn478 show a composition bias toward basic and acidic residues. A compositionally biased stretch (low complexity) spans His479 to Ala493. The span at Phe499 to Lys508 shows a compositional bias: polar residues. The span at Gln513 to Pro528 shows a compositional bias: acidic residues. Residues Asn559 to Asn579 are compositionally biased toward low complexity.

Homomers. Interacts with itself, danr, ey and dac to form a complex (or complexes) containing the RD factors.

The protein resides in the nucleus. Functionally, probable transcription factor with a role in the retinal determination (RD) network. Contributes to differentiation of antenna-specific characteristics. The polypeptide is Protein distal antenna (Aedes aegypti (Yellowfever mosquito)).